The primary structure comprises 396 residues: Subtilisin-like protease 5 (396 aa).

Residues 1-20 (MTGFFTILSFSLAALSVTNA) form the signal peptide. The propeptide occupies 21–116 (AQILSVPKGA…VEPDAIISQH (96 aa)). The 77-residue stretch at 37 to 113 (YIVVMKDDTS…VAFVEPDAII (77 aa)) folds into the Inhibitor I9 domain. N-linked (GlcNAc...) asparagine glycosylation occurs at asparagine 63. The Peptidase S8 domain occupies 125–396 (PWGLSRLSNR…SRLLYNGSGR (272 aa)). Active-site charge relay system residues include aspartate 156 and histidine 187. N-linked (GlcNAc...) asparagine glycosylation is found at asparagine 230 and asparagine 248. Serine 342 (charge relay system) is an active-site residue. Residues 376–389 (PTIRNPGPDTTSRL) are compositionally biased toward polar residues. The segment at 376–396 (PTIRNPGPDTTSRLLYNGSGR) is disordered. N-linked (GlcNAc...) asparagine glycosylation is present at asparagine 392.

It belongs to the peptidase S8 family.

The protein localises to the secreted. Its function is as follows. Secreted subtilisin-like serine protease with keratinolytic activity that contributes to pathogenicity. In Trichophyton verrucosum (Cattle ringworm fungus), this protein is Subtilisin-like protease 5 (SUB5).